We begin with the raw amino-acid sequence, 80 residues long: Large ribosomal subunit protein bL31 (80 aa).

Residues cysteine 16, cysteine 18, cysteine 38, and cysteine 41 each coordinate Zn(2+).

This sequence belongs to the bacterial ribosomal protein bL31 family. Type A subfamily. In terms of assembly, part of the 50S ribosomal subunit. Zn(2+) is required as a cofactor.

Its function is as follows. Binds the 23S rRNA. This Mycobacterium avium (strain 104) protein is Large ribosomal subunit protein bL31.